A 492-amino-acid polypeptide reads, in one-letter code: UPF0236 protein TTE1650/TTE2708 (492 aa).

Belongs to the UPF0236 family.

The chain is UPF0236 protein TTE1650/TTE2708 from Caldanaerobacter subterraneus subsp. tengcongensis (strain DSM 15242 / JCM 11007 / NBRC 100824 / MB4) (Thermoanaerobacter tengcongensis).